The following is a 30-amino-acid chain: Proteinase inhibitor CeKI (30 aa).

It belongs to the protease inhibitor I3 (leguminous Kunitz-type inhibitor) family.

Its function is as follows. Potent inhibitor of serine proteases plasma kallikrein, plasmin and coagulation factor XIIa. Weak inhibitor of serine proteases trypsin and coagulation factor Xa. Does not inhibit the serine proteases chymotrypsin, elastase or thrombin. Inhibits kinin release from HMW-kininogen by kallikrein in vitro. The chain is Proteinase inhibitor CeKI from Paubrasilia echinata (Pau Brasil).